The chain runs to 433 residues: 23S rRNA (uracil(1939)-C(5))-methyltransferase RlmD (433 aa).

The region spanning 10–68 (RTTTRQIITVSVNDLDSFGQGVARHNGKTLFIPGLLPQENAEVTVTEDKKQYARAKVVR) is the TRAM domain. Positions 81, 87, 90, and 162 each coordinate [4Fe-4S] cluster. S-adenosyl-L-methionine contacts are provided by glutamine 265, phenylalanine 294, asparagine 299, glutamate 315, asparagine 342, and aspartate 363. Cysteine 389 (nucleophile) is an active-site residue.

It belongs to the class I-like SAM-binding methyltransferase superfamily. RNA M5U methyltransferase family. RlmD subfamily.

The catalysed reaction is uridine(1939) in 23S rRNA + S-adenosyl-L-methionine = 5-methyluridine(1939) in 23S rRNA + S-adenosyl-L-homocysteine + H(+). Its function is as follows. Catalyzes the formation of 5-methyl-uridine at position 1939 (m5U1939) in 23S rRNA. This chain is 23S rRNA (uracil(1939)-C(5))-methyltransferase RlmD, found in Shigella boydii serotype 4 (strain Sb227).